Consider the following 359-residue polypeptide: Centromere-binding protein 1 (359 aa).

A disordered region spans residues 1 to 262 (MSGKRSYQDD…SHKEVERRRR (262 aa)). Basic and acidic residues predominate over residues 55–78 (KENKENRDGDKVGDDEHDVVKGES). Acidic residues predominate over residues 120-161 (GDEDEDEDEEEEEDEDDHVDIDDVDKDPDAVIDEDDDEEDED). Residues 249–259 (QRKESHKEVER) are compositionally biased toward basic and acidic residues. One can recognise a bHLH domain in the interval 249 to 297 (QRKESHKEVERRRRQNINTAIEKLSDLLPVKETSKAAILSRAAEYIQKM).

As to quaternary structure, binds DNA as a dimer.

Its subcellular location is the nucleus. The protein localises to the chromosome. It localises to the centromere. Functionally, required for chromosome stability and methionine prototrophy. It is involved in chromosomal segregation. Binds to a highly conserved DNA sequence (5'-RTCACRTG-3'), called CDEI, found in centromeres and in several promoters. The chain is Centromere-binding protein 1 (CBF1) from Kluyveromyces lactis (strain ATCC 8585 / CBS 2359 / DSM 70799 / NBRC 1267 / NRRL Y-1140 / WM37) (Yeast).